Consider the following 160-residue polypeptide: Envelope glycoprotein L (160 aa).

The signal sequence occupies residues 1 to 22; the sequence is MASHKWLLQMIVFLKTITIAYC. The segment at 24–149 is interaction with gH; it reads HLQDDTPLFF…TNIPENGCVW (126 aa). The gL alphaherpesvirus-type domain maps to 28-160; it reads DTPLFFGAKP…ADRLFQRVCQ (133 aa). 2 disulfides stabilise this stretch: C49-C80 and C147-C159.

It belongs to the herpesviridae glycoprotein L (gL) family. Alphaherpesvirinae gL subfamily. As to quaternary structure, interacts with glycoprotein H (gH); this interaction is necessary for the correct processing and cell surface expression of gH. The heterodimer gH/gL seems to interact with gB trimers during fusion.

It localises to the virion membrane. Its subcellular location is the host cell membrane. The protein localises to the host Golgi apparatus. It is found in the host trans-Golgi network. Functionally, the heterodimer glycoprotein H-glycoprotein L is required for the fusion of viral and plasma membranes leading to virus entry into the host cell. Acts as a functional inhibitor of gH and maintains gH in an inhibited form. Upon binding to host integrins, gL dissociates from gH leading to activation of the viral fusion glycoproteins gB and gH. In Varicella-zoster virus (strain Oka vaccine) (HHV-3), this protein is Envelope glycoprotein L.